We begin with the raw amino-acid sequence, 555 residues long: E3 ubiquitin-protein ligase ARIH1 (555 aa).

A compositionally biased stretch (acidic residues) spans Met1–Leu47. A disordered region spans residues Met1 to Gln93. The span at Glu65–Gly90 shows a compositional bias: gly residues. The segment at Thr103 to Asn151 is UBA-like. Lys140 carries the N6-acetyllysine modification. The interval Gln180–Asn391 is TRIAD supradomain. The Zn(2+) site is built by Cys184, Cys187, Cys201, His203, Cys206, Cys209, Cys229, Cys234, Cys274, Cys279, Cys295, Cys297, Cys302, Cys305, His310, Cys315, Cys342, and Cys345. The RING-type 1 zinc finger occupies Cys184 to Cys234. An IBR-type zinc finger spans residues Leu254–Cys315. The RING-type 2; atypical zinc finger occupies Cys342 to Cys373. Cys355 is a catalytic residue. Positions 360, 365, 370, 373, 380, and 387 each coordinate Zn(2+). The tract at residues Arg406 to Asp555 is ariadne domain.

The protein belongs to the RBR family. Ariadne subfamily. In terms of assembly, interacts (via the first RING-type zinc finger) with UBE2L3. Associates with cullin-RING ubiquitin ligase (CRL) complexes containing CUL1, CUL2 and CUL3. Interacts with neddylated CUL1. Interacts with neddylated CUL2. Interacts with neddylated CUL3. Interacts with neddylated CUL4A.

The protein resides in the cytoplasm. It localises to the nucleus. Its subcellular location is the cajal body. It catalyses the reaction [E2 ubiquitin-conjugating enzyme]-S-ubiquitinyl-L-cysteine + [acceptor protein]-L-lysine = [E2 ubiquitin-conjugating enzyme]-L-cysteine + [acceptor protein]-N(6)-ubiquitinyl-L-lysine.. It functions in the pathway protein modification; protein ubiquitination. Its activity is regulated as follows. Autoinhibited by the ariadne domain, which masks the second RING-type zinc finger that contains the active site and inhibits the E3 activity. Inhibition is relieved upon binding to neddylated cullin-RING ubiquitin ligase complexes, which activate the E3 ligase activity of ARIH1. In terms of biological role, E3 ubiquitin-protein ligase, which catalyzes ubiquitination of target proteins together with ubiquitin-conjugating enzyme E2 UBE2L3. Acts as an atypical E3 ubiquitin-protein ligase by working together with cullin-RING ubiquitin ligase (CRL) complexes and initiating ubiquitination of CRL substrates: associates with CRL complexes and specifically mediates addition of the first ubiquitin on CRLs targets. The initial ubiquitin is then elongated by CDC34/UBE2R1 and UBE2R2. E3 ubiquitin-protein ligase activity is activated upon binding to neddylated cullin-RING ubiquitin ligase complexes. Plays a role in protein translation in response to DNA damage by mediating ubiquitination of EIF4E2, the consequences of EIF4E2 ubiquitination are however unclear. According to a report, EIF4E2 ubiquitination leads to promote EIF4E2 cap-binding and protein translation arrest. According to another report EIF4E2 ubiquitination leads to its subsequent degradation. Acts as the ligase involved in ISGylation of EIF4E2. In vitro, controls the degradation of the LINC (LInker of Nucleoskeleton and Cytoskeleton) complex member SUN2 and may therefore have a role in the formation and localization of the LINC complex, and as a consequence, may act in nuclear subcellular localization and nuclear morphology. The protein is E3 ubiquitin-protein ligase ARIH1 (ARIH1) of Bos taurus (Bovine).